The primary structure comprises 455 residues: ATP-dependent protease ATPase subunit HslU (455 aa).

ATP is bound by residues isoleucine 19, 61–66, aspartate 268, glutamate 333, and arginine 405; that span reads GVGKTE.

It belongs to the ClpX chaperone family. HslU subfamily. In terms of assembly, a double ring-shaped homohexamer of HslV is capped on each side by a ring-shaped HslU homohexamer. The assembly of the HslU/HslV complex is dependent on binding of ATP.

The protein localises to the cytoplasm. Functionally, ATPase subunit of a proteasome-like degradation complex; this subunit has chaperone activity. The binding of ATP and its subsequent hydrolysis by HslU are essential for unfolding of protein substrates subsequently hydrolyzed by HslV. HslU recognizes the N-terminal part of its protein substrates and unfolds these before they are guided to HslV for hydrolysis. This chain is ATP-dependent protease ATPase subunit HslU, found in Francisella philomiragia subsp. philomiragia (strain ATCC 25017 / CCUG 19701 / FSC 153 / O#319-036).